The following is a 250-amino-acid chain: Probable transcriptional regulatory protein Mkms_2298 (250 aa).

The protein belongs to the TACO1 family.

It is found in the cytoplasm. The chain is Probable transcriptional regulatory protein Mkms_2298 from Mycobacterium sp. (strain KMS).